A 185-amino-acid polypeptide reads, in one-letter code: Ribosome-recycling factor (185 aa).

This sequence belongs to the RRF family.

The protein localises to the cytoplasm. Its function is as follows. Responsible for the release of ribosomes from messenger RNA at the termination of protein biosynthesis. May increase the efficiency of translation by recycling ribosomes from one round of translation to another. The sequence is that of Ribosome-recycling factor from Streptococcus suis (strain 98HAH33).